We begin with the raw amino-acid sequence, 334 residues long: G-protein coupled receptor 12 (334 aa).

Over 1–48 (MNEDPKVNLSGLPRDCIEAGTPENISAAVPSQGSVVESEPELVVNPWD) the chain is Extracellular. 2 N-linked (GlcNAc...) asparagine glycosylation sites follow: Asn8 and Asn24. Residues 49 to 69 (IVLCSSGTLICCENAVVVLII) traverse the membrane as a helical segment. Residues 70 to 78 (FHSPSLRAP) are Cytoplasmic-facing. A helical transmembrane segment spans residues 79–99 (MFLLIGSLALADLLAGLGLII). Residues 100-113 (NFVFAYLLQSEATK) are Extracellular-facing. A helical membrane pass occupies residues 114–134 (LVTIGLIVASFSASVCSLLAI). The Cytoplasmic segment spans residues 135-158 (TVDRYLSLYYALTYHSERTVTFTY). Residues 159–179 (VMLVMLWGTSTCLGLLPVMGW) traverse the membrane as a helical segment. The Extracellular segment spans residues 180–199 (NCLRDESTCSVVRPLTKNNA). A helical transmembrane segment spans residues 200–220 (AILSISFLFMFALMLQLYIQI). The Cytoplasmic portion of the chain corresponds to 221–252 (CKIVMRHAHQIALQHHFLATSHYVTTRKGIST). Residues 253 to 273 (LALILGTFAACWMPFTLYSLI) traverse the membrane as a helical segment. At 274–282 (ADYTYPSIY) the chain is on the extracellular side. A helical membrane pass occupies residues 283 to 303 (TYATLLPATYNSIINPVIYAF). The Cytoplasmic portion of the chain corresponds to 304 to 334 (RNQEIQKALCLICCGCIPNTLSQRARSPSDV). Cys317 carries the S-palmitoyl cysteine lipid modification. A phosphoserine mark is found at Ser330 and Ser332.

This sequence belongs to the G-protein coupled receptor 1 family. As to expression, expressed in the brain, pituitary gland and testis.

The protein resides in the cell membrane. In terms of biological role, receptor with constitutive G(s) signaling activity that activates cyclic AMP. Promotes neurite outgrowth and blocks myelin inhibition in neurons. The sequence is that of G-protein coupled receptor 12 (Gpr12) from Rattus norvegicus (Rat).